Here is a 144-residue protein sequence, read N- to C-terminus: Large ribosomal subunit protein uL16 (144 aa).

This sequence belongs to the universal ribosomal protein uL16 family. In terms of assembly, part of the 50S ribosomal subunit.

In terms of biological role, binds 23S rRNA and is also seen to make contacts with the A and possibly P site tRNAs. This Halalkalibacterium halodurans (strain ATCC BAA-125 / DSM 18197 / FERM 7344 / JCM 9153 / C-125) (Bacillus halodurans) protein is Large ribosomal subunit protein uL16.